We begin with the raw amino-acid sequence, 72 residues long: uncharacterized protein (72 aa).

Belongs to the ycf76 family.

The protein localises to the plastid. It is found in the chloroplast. This is an uncharacterized protein from Oryza nivara (Indian wild rice).